The following is a 335-amino-acid chain: Nucleoid-associated protein PputGB1_0980 (335 aa).

The protein belongs to the YejK family.

The protein resides in the cytoplasm. It is found in the nucleoid. The polypeptide is Nucleoid-associated protein PputGB1_0980 (Pseudomonas putida (strain GB-1)).